We begin with the raw amino-acid sequence, 179 residues long: uncharacterized protein (179 aa).

Positions 53-82 (SPEREDPESPTRGVDEVDGACSEPPTPRPE) are disordered. The span at 54–67 (PEREDPESPTRGVD) shows a compositional bias: basic and acidic residues.

This is an uncharacterized protein from Ictaluridae (bullhead catfishes).